The following is a 499-amino-acid chain: Probable alpha-L-arabinofuranosidase B (499 aa).

Positions 1-18 are cleaved as a signal peptide; it reads MFSRRNLVALGLAATVSA. A catalytic region spans residues 19 to 335; that stretch reads GPCDIYEAGD…ENIVAAKYVS (317 aa). 3 disulfide bridges follow: Cys21-Cys31, Cys81-Cys86, and Cys176-Cys177. N-linked (GlcNAc...) asparagine glycosylation occurs at Asn83. Asn202 carries an N-linked (GlcNAc...) asparagine glycan. Residue Asp219 coordinates substrate. Residue Glu221 is the Nucleophile of the active site. Substrate-binding residues include Asn222, Asn223, and Gly296. Asp297 acts as the Proton donor in catalysis. The segment at 336–499 is ABD; the sequence is GSLVSGPSFT…SFEIETAFAS (164 aa). Cysteines 401 and 439 form a disulfide. Positions 416, 418, 419, 435, 463, 465, 468, and 488 each coordinate substrate.

Belongs to the glycosyl hydrolase 54 family.

The protein localises to the secreted. The enzyme catalyses Hydrolysis of terminal non-reducing alpha-L-arabinofuranoside residues in alpha-L-arabinosides.. Its pathway is glycan metabolism; L-arabinan degradation. Its function is as follows. Alpha-L-arabinofuranosidase involved in the degradation of arabinoxylan, a major component of plant hemicellulose. Able to hydrolyze 1,5-, 1,3- and 1,2-alpha-linkages not only in L-arabinofuranosyl oligosaccharides, but also in polysaccharides containing terminal non-reducing L-arabinofuranoses in side chains, like L-arabinan, arabinogalactan and arabinoxylan. This Aspergillus niger (strain ATCC MYA-4892 / CBS 513.88 / FGSC A1513) protein is Probable alpha-L-arabinofuranosidase B (abfB).